Reading from the N-terminus, the 33-residue chain is uncharacterized protein (33 aa).

This sequence to E.coli ylcH.

This is an uncharacterized protein from Enterobacteria phage 82 (Bacteriophage 82).